We begin with the raw amino-acid sequence, 158 residues long: SsrA-binding protein (158 aa).

Positions 131-158 (GKKTHDKRETEKKRDWNREKARLLRDRG) are disordered. Positions 136-158 (DKRETEKKRDWNREKARLLRDRG) are enriched in basic and acidic residues.

This sequence belongs to the SmpB family.

The protein resides in the cytoplasm. In terms of biological role, required for rescue of stalled ribosomes mediated by trans-translation. Binds to transfer-messenger RNA (tmRNA), required for stable association of tmRNA with ribosomes. tmRNA and SmpB together mimic tRNA shape, replacing the anticodon stem-loop with SmpB. tmRNA is encoded by the ssrA gene; the 2 termini fold to resemble tRNA(Ala) and it encodes a 'tag peptide', a short internal open reading frame. During trans-translation Ala-aminoacylated tmRNA acts like a tRNA, entering the A-site of stalled ribosomes, displacing the stalled mRNA. The ribosome then switches to translate the ORF on the tmRNA; the nascent peptide is terminated with the 'tag peptide' encoded by the tmRNA and targeted for degradation. The ribosome is freed to recommence translation, which seems to be the essential function of trans-translation. This chain is SsrA-binding protein, found in Brucella abortus biovar 1 (strain 9-941).